Here is a 187-residue protein sequence, read N- to C-terminus: Translation machinery-associated protein 22 (187 aa).

Residues 94 to 165 (VTIKRIERNK…EIEEFILEKY (72 aa)) enclose the SUI1 domain.

Belongs to the DENR family. In terms of assembly, interacts with the 40S ribosomal subunit.

The protein resides in the cytoplasm. The chain is Translation machinery-associated protein 22 (tma-22) from Neurospora crassa (strain ATCC 24698 / 74-OR23-1A / CBS 708.71 / DSM 1257 / FGSC 987).